A 426-amino-acid chain; its full sequence is UDP-N-acetylglucosamine 1-carboxyvinyltransferase (426 aa).

Position 22-23 (22-23 (KN)) interacts with phosphoenolpyruvate. Arginine 94 provides a ligand contact to UDP-N-acetyl-alpha-D-glucosamine. The Proton donor role is filled by cysteine 118. At cysteine 118 the chain carries 2-(S-cysteinyl)pyruvic acid O-phosphothioketal. Residues 123 to 127 (RPVDL), aspartate 309, and isoleucine 331 each bind UDP-N-acetyl-alpha-D-glucosamine.

Belongs to the EPSP synthase family. MurA subfamily.

Its subcellular location is the cytoplasm. It catalyses the reaction phosphoenolpyruvate + UDP-N-acetyl-alpha-D-glucosamine = UDP-N-acetyl-3-O-(1-carboxyvinyl)-alpha-D-glucosamine + phosphate. Its pathway is cell wall biogenesis; peptidoglycan biosynthesis. Its function is as follows. Cell wall formation. Adds enolpyruvyl to UDP-N-acetylglucosamine. In Paracoccus denitrificans (strain Pd 1222), this protein is UDP-N-acetylglucosamine 1-carboxyvinyltransferase.